Consider the following 360-residue polypeptide: Histidinol-phosphate aminotransferase (360 aa).

The residue at position 222 (lysine 222) is an N6-(pyridoxal phosphate)lysine.

The protein belongs to the class-II pyridoxal-phosphate-dependent aminotransferase family. Histidinol-phosphate aminotransferase subfamily. As to quaternary structure, homodimer. Pyridoxal 5'-phosphate is required as a cofactor.

The catalysed reaction is L-histidinol phosphate + 2-oxoglutarate = 3-(imidazol-4-yl)-2-oxopropyl phosphate + L-glutamate. Its pathway is amino-acid biosynthesis; L-histidine biosynthesis; L-histidine from 5-phospho-alpha-D-ribose 1-diphosphate: step 7/9. This Listeria monocytogenes serotype 4b (strain CLIP80459) protein is Histidinol-phosphate aminotransferase.